Consider the following 835-residue polypeptide: Leucine--tRNA ligase (835 aa).

The 'HIGH' region signature appears at 36–46 (PYPSGKIHVGH). Positions 602–606 (KMSKS) match the 'KMSKS' region motif. Position 605 (Lys-605) interacts with ATP.

The protein belongs to the class-I aminoacyl-tRNA synthetase family.

It localises to the cytoplasm. It carries out the reaction tRNA(Leu) + L-leucine + ATP = L-leucyl-tRNA(Leu) + AMP + diphosphate. The sequence is that of Leucine--tRNA ligase from Rickettsia peacockii (strain Rustic).